Consider the following 342-residue polypeptide: MSVHPTQTLSLSQYLIEEQLKLPQATGDFTALMSHLVYAAKIVSREVRKAGLLENILGATETVNVQGETQMKLDEYADKVFNHTLTRSGHLCILGSEEHEETVPVPNGYKIGKYTIAIDPLDGSSNIDANVSIGTIFSVHLRKSPAGTPGTLSDLLQQGSGQRAAGYVLYGSSTMLILCTGKGVSGFTLDPSCGEFILSHPDMQIPETGGIYSINEGNYNYWSDEVKNYIRDIKSIEGGRKPQSGRYIGSLVADFHRNLLKGGIFLYPNDTKSTKYPNGKLRLLYEAAPMAFIAEQAGGMAVTVYGERILDLTPKELHERTTLVVGSKKEVEHFLKFAPKKS.

The Mg(2+) site is built by Glu-97, Asp-119, Leu-121, and Asp-122. Substrate is bound by residues 122-125 (DGSS), Asn-215, Tyr-247, and Lys-280. Glu-286 serves as a coordination point for Mg(2+).

Belongs to the FBPase class 1 family. Homotetramer. Mg(2+) is required as a cofactor.

The protein localises to the cytoplasm. The enzyme catalyses beta-D-fructose 1,6-bisphosphate + H2O = beta-D-fructose 6-phosphate + phosphate. It functions in the pathway carbohydrate biosynthesis; gluconeogenesis. The chain is Fructose-1,6-bisphosphatase class 1 from Leptospira interrogans serogroup Icterohaemorrhagiae serovar copenhageni (strain Fiocruz L1-130).